A 131-amino-acid chain; its full sequence is Fumarate reductase subunit C (131 aa).

3 helical membrane passes run Glu-30–Leu-50, Trp-57–Leu-77, and Ile-109–Leu-129.

This sequence belongs to the FrdC family. As to quaternary structure, part of an enzyme complex containing four subunits: a flavoprotein (FrdA), an iron-sulfur protein (FrdB), and two hydrophobic anchor proteins (FrdC and FrdD).

It localises to the cell inner membrane. In terms of biological role, two distinct, membrane-bound, FAD-containing enzymes are responsible for the catalysis of fumarate and succinate interconversion; fumarate reductase is used in anaerobic growth, and succinate dehydrogenase is used in aerobic growth. Anchors the catalytic components of the fumarate reductase complex to the cell inner membrane, binds quinones. The chain is Fumarate reductase subunit C from Salmonella dublin (strain CT_02021853).